A 75-amino-acid polypeptide reads, in one-letter code: uncharacterized protein (75 aa).

Residues 1–75 (MIKIYSTPTC…KAEIDKLIEK (75 aa)) enclose the Glutaredoxin domain. Cys-10 and Cys-13 form a disulfide bridge.

The protein belongs to the glutaredoxin family.

This is an uncharacterized protein from Clostridium pasteurianum.